A 293-amino-acid chain; its full sequence is Large ribosomal subunit protein uL2c (293 aa).

A disordered region spans residues 224–245; sequence VMNPVDHPHGGGEGKSPIGRAR.

This sequence belongs to the universal ribosomal protein uL2 family. Part of the 50S ribosomal subunit.

The protein localises to the plastid. The protein resides in the chloroplast. This chain is Large ribosomal subunit protein uL2c (rpl2), found in Pyropia yezoensis (Susabi-nori).